A 68-amino-acid chain; its full sequence is MPIVSKYSNERVEKIIQDLLDVLVKEEVTPDLALMCLGNAVTNIIAQVPESKRVAVVDNFTKALKQSV.

This sequence belongs to the UPF0352 family.

In Colwellia psychrerythraea (strain 34H / ATCC BAA-681) (Vibrio psychroerythus), this protein is UPF0352 protein CPS_2611.